The sequence spans 105 residues: Small ribosomal subunit protein uS10c (105 aa).

It belongs to the universal ribosomal protein uS10 family. Part of the 30S ribosomal subunit.

The protein resides in the plastid. Its subcellular location is the chloroplast. Its function is as follows. Involved in the binding of tRNA to the ribosomes. The protein is Small ribosomal subunit protein uS10c of Porphyra purpurea (Red seaweed).